The chain runs to 481 residues: Cardiolipin synthase A (481 aa).

2 helical membrane-spanning segments follow: residues 10-30 (FFGY…LHAL) and 40-60 (IAWA…YLIF). PLD phosphodiesterase domains are found at residues 220–247 (VNFR…GDEY) and 394–421 (QPGF…DNRS). Active-site residues include H225, K227, D232, H399, K401, and D406.

Belongs to the phospholipase D family. Cardiolipin synthase subfamily. ClsA sub-subfamily.

It localises to the cell inner membrane. The catalysed reaction is 2 a 1,2-diacyl-sn-glycero-3-phospho-(1'-sn-glycerol) = a cardiolipin + glycerol. Functionally, catalyzes the reversible phosphatidyl group transfer from one phosphatidylglycerol molecule to another to form cardiolipin (CL) (diphosphatidylglycerol) and glycerol. The polypeptide is Cardiolipin synthase A (Pseudomonas putida (strain ATCC 47054 / DSM 6125 / CFBP 8728 / NCIMB 11950 / KT2440)).